The primary structure comprises 363 residues: Peptide chain release factor 2 (363 aa).

Gln251 bears the N5-methylglutamine mark.

The protein belongs to the prokaryotic/mitochondrial release factor family. Methylated by PrmC. Methylation increases the termination efficiency of RF2.

The protein localises to the cytoplasm. In terms of biological role, peptide chain release factor 2 directs the termination of translation in response to the peptide chain termination codons UGA and UAA. The sequence is that of Peptide chain release factor 2 from Helicobacter pylori (strain P12).